The primary structure comprises 134 residues: Large ribosomal subunit protein eL27 (134 aa).

In terms of domain architecture, KOW spans 5–40 (LKSGKVVVVLSGRFAGKKAVIVRNFDDGTSSRPYGH).

The protein belongs to the eukaryotic ribosomal protein eL27 family.

This Pyrobotrys stellatus (Green alga) protein is Large ribosomal subunit protein eL27 (RPL27).